The sequence spans 58 residues: Large ribosomal subunit protein uL30 (58 aa).

It belongs to the universal ribosomal protein uL30 family. Part of the 50S ribosomal subunit.

In Vibrio campbellii (strain ATCC BAA-1116), this protein is Large ribosomal subunit protein uL30.